The chain runs to 239 residues: Putative ankyrin repeat protein RBE_0489 (239 aa).

ANK repeat units lie at residues 23 to 52, 80 to 109, and 113 to 143; these read ISSR…SPNA, GIDT…FINA, and FGFT…SLTL.

The sequence is that of Putative ankyrin repeat protein RBE_0489 from Rickettsia bellii (strain RML369-C).